Consider the following 512-residue polypeptide: NAD(P) transhydrogenase subunit alpha (512 aa).

Over 1-400 (MLIGVPRELL…KESKPTDPRV (400 aa)) the chain is Cytoplasmic. NAD(+) contacts are provided by residues 125–128 (QALD), V175, 195–197 (DSR), and G225. A disordered region spans residues 375 to 394 (SAQPKQETKAAPVAEKKESK). 2 helical membrane passes run 401–421 (KYGV…VAPA) and 422–442 (AFLS…YVVW). Residues 443–451 (NVSHALHTP) are Cytoplasmic-facing. The helical transmembrane segment at 452–472 (LMAVTNAISGIIIVGALLQIR) threads the bilayer. The Periplasmic segment spans residues 473 to 478 (QPTGNL). The helical transmembrane segment at 479-499 (FIDALAFVAILVASINIFGGF) threads the bilayer. The Cytoplasmic segment spans residues 500–512 (RVTQRMLAMFRKG).

It belongs to the AlaDH/PNT family. As to quaternary structure, heterodimer of an alpha (PntA) and a beta (PntB) chain.

Its subcellular location is the cell inner membrane. It catalyses the reaction NAD(+) + NADPH + H(+)(in) = NADH + NADP(+) + H(+)(out). Its function is as follows. The transhydrogenation between NADH and NADP is coupled to respiration and ATP hydrolysis and functions as a proton pump across the membrane. This is NAD(P) transhydrogenase subunit alpha (pntA) from Haemophilus influenzae (strain ATCC 51907 / DSM 11121 / KW20 / Rd).